The sequence spans 1062 residues: Probable sucrose-phosphate synthase 3 (1062 aa).

Residues 113-122 (EREQGRRDAT) show a composition bias toward basic and acidic residues. The disordered stretch occupies residues 113 to 141 (EREQGRRDATEDLSEDLSEGEKGDGLGEI). Ser126, Ser130, and Ser156 each carry phosphoserine. Residues 715–735 (MDGDKPSLNGSLEPNSADPVK) form a disordered region.

Belongs to the glycosyltransferase 1 family. In terms of assembly, homodimer or homotetramer.

It carries out the reaction beta-D-fructose 6-phosphate + UDP-alpha-D-glucose = sucrose 6(F)-phosphate + UDP + H(+). It participates in glycan biosynthesis; sucrose biosynthesis; sucrose from D-fructose 6-phosphate and UDP-alpha-D-glucose: step 1/2. With respect to regulation, activity is regulated by phosphorylation and moderated by concentration of metabolites and light. Its function is as follows. Plays a role in photosynthetic sucrose synthesis by catalyzing the rate-limiting step of sucrose biosynthesis from UDP-glucose and fructose- 6-phosphate. Involved in the regulation of carbon partitioning in the leaves of plants. May regulate the synthesis of sucrose and therefore play a major role as a limiting factor in the export of photoassimilates out of the leaf. Plays a role for sucrose availability that is essential for plant growth and fiber elongation. The polypeptide is Probable sucrose-phosphate synthase 3 (SPS3) (Arabidopsis thaliana (Mouse-ear cress)).